We begin with the raw amino-acid sequence, 1902 residues long: Plexin-B3 (1902 aa).

The signal sequence occupies residues 1–36 (MLTDFLQAPVMAPWSPFSLHLLLLFLPLLPLTRVHR). Residues 37–461 (FSVPNTSFNH…TAQQVDRILV (425 aa)) enclose the Sema domain. Residues 37 to 1245 (FSVPNTSFNH…MMSTFPVEAQ (1209 aa)) lie on the Extracellular side of the membrane. A glycan (N-linked (GlcNAc...) asparagine) is linked at asparagine 41. Disulfide bonds link cysteine 88-cysteine 97 and cysteine 122-cysteine 130. A glycan (N-linked (GlcNAc...) asparagine) is linked at asparagine 221. Cystine bridges form between cysteine 257/cysteine 360, cysteine 273/cysteine 305, and cysteine 323/cysteine 347. The segment at 353–372 (DSPESYPCGDEHTPSPIAGR) is disordered. 2 N-linked (GlcNAc...) asparagine glycosylation sites follow: asparagine 416 and asparagine 469. Residues 463–515 (ACPQFPNCTTCLQARDPLCGWCILQGRCTRRGECGRAAQPNHWLWSYEDNHCP) enclose the PSI 1 domain. 5 disulfide bridges follow: cysteine 464/cysteine 481, cysteine 470/cysteine 514, cysteine 473/cysteine 490, cysteine 484/cysteine 496, and cysteine 551/cysteine 569. PSI domains follow at residues 609–671 (DCSA…EACP) and 776–822 (DCAM…QLCP). N-linked (GlcNAc...) asparagine glycans are attached at residues asparagine 791, asparagine 889, asparagine 910, asparagine 946, asparagine 1090, and asparagine 1207. IPT/TIG domains follow at residues 823–914 (IPSI…FTYQ), 915–1001 (DPVL…FRYT), 1003–1134 (NPQL…FLYQ), and 1154–1221 (KPGH…QMGN). The chain crosses the membrane as a helical span at residues 1246–1266 (LGLGMGAAVLIAAVLLLTLMY). The Cytoplasmic portion of the chain corresponds to 1267-1902 (RHKSKKALRD…ALVEYKVTDL (636 aa)).

The protein belongs to the plexin family. As to quaternary structure, binds MET and MST1R. Interacts with RIT2/RIN. May form homodimers (via Sema domain). Interacts (via cytoplasmic domain) with FSCN1, ARHGDIA and RAC1. Expressed in brain (at protein level). In cerebellum, strongest expression detected in Purkinje and granular cells. Detected at very low levels in several fetal tissues, including dorsal root ganglia (DRG), heart, lung, optic bulb, brain and liver.

Its subcellular location is the cell membrane. In terms of biological role, receptor for SEMA5A that plays a role in axon guidance, invasive growth and cell migration. Stimulates neurite outgrowth and mediates Ca(2+)/Mg(2+)-dependent cell aggregation. In glioma cells, SEMA5A stimulation of PLXNB3 results in the disassembly of F-actin stress fibers, disruption of focal adhesions and cellular collapse as well as inhibition of cell migration and invasion through ARHGDIA-mediated inactivation of RAC1. Seem to be non-essential for normal development and function of the central nervous system. This is Plexin-B3 (Plxnb3) from Mus musculus (Mouse).